The sequence spans 274 residues: MEQSSGAVIRSYAKINLFLDVTKKRDDGYHEILSLFQNISLYDRLIITKIDRGLEIKTNVDIENNILYKTWDVFSSNFKEPEFGLRIVLEKNIPMQAGLGGGSSNAAALLFYLSDQLKIPKNKIIKIAAKIGSDVPFFLIGGTAVVKGKGEIIEPLPPLLGYYVKLITANGISTKEAYNLLNSTLFNKAPCSPYALYEAYYHRNIDEIKRCTYNIFEKVIAKQNREIAQNIKKLKKNSIVSTLTGSGSAVYGISFREGDFNFVPRGVEYEEINI.

The active site involves Lys14. Residue Pro94–Ser104 coordinates ATP. Asp134 is a catalytic residue.

This sequence belongs to the GHMP kinase family. IspE subfamily.

It carries out the reaction 4-CDP-2-C-methyl-D-erythritol + ATP = 4-CDP-2-C-methyl-D-erythritol 2-phosphate + ADP + H(+). The protein operates within isoprenoid biosynthesis; isopentenyl diphosphate biosynthesis via DXP pathway; isopentenyl diphosphate from 1-deoxy-D-xylulose 5-phosphate: step 3/6. Catalyzes the phosphorylation of the position 2 hydroxy group of 4-diphosphocytidyl-2C-methyl-D-erythritol. The protein is 4-diphosphocytidyl-2-C-methyl-D-erythritol kinase of Thermosipho melanesiensis (strain DSM 12029 / CIP 104789 / BI429).